The chain runs to 449 residues: Ribulose bisphosphate carboxylase large chain (449 aa).

An N6,N6,N6-trimethyllysine modification is found at Lys-7. Substrate-binding residues include Asn-116 and Thr-166. Lys-168 serves as the catalytic Proton acceptor. Residue Lys-170 participates in substrate binding. Positions 194, 196, and 197 each coordinate Mg(2+). Lys-194 is subject to N6-carboxylysine. His-287 (proton acceptor) is an active-site residue. The substrate site is built by Arg-288, His-320, and Ser-372.

This sequence belongs to the RuBisCO large chain family. Type I subfamily. As to quaternary structure, heterohexadecamer of 8 large chains and 8 small chains; disulfide-linked. The disulfide link is formed within the large subunit homodimers. The cofactor is Mg(2+). Post-translationally, the disulfide bond which can form in the large chain dimeric partners within the hexadecamer appears to be associated with oxidative stress and protein turnover.

Its subcellular location is the plastid. The protein resides in the chloroplast. It catalyses the reaction 2 (2R)-3-phosphoglycerate + 2 H(+) = D-ribulose 1,5-bisphosphate + CO2 + H2O. It carries out the reaction D-ribulose 1,5-bisphosphate + O2 = 2-phosphoglycolate + (2R)-3-phosphoglycerate + 2 H(+). Functionally, ruBisCO catalyzes two reactions: the carboxylation of D-ribulose 1,5-bisphosphate, the primary event in carbon dioxide fixation, as well as the oxidative fragmentation of the pentose substrate in the photorespiration process. Both reactions occur simultaneously and in competition at the same active site. This Liriope muscari (Big blue lilyturf) protein is Ribulose bisphosphate carboxylase large chain.